Consider the following 163-residue polypeptide: ATP synthase subunit delta, chloroplastic (163 aa).

This sequence belongs to the ATPase delta chain family. In terms of assembly, F-type ATPases have 2 components, F(1) - the catalytic core - and F(0) - the membrane proton channel. F(1) has five subunits: alpha(3), beta(3), gamma(1), delta(1), epsilon(1). CF(0) has four main subunits: a(1), b(1), b'(1) and c(10-14). The alpha and beta chains form an alternating ring which encloses part of the gamma chain. F(1) is attached to F(0) by a central stalk formed by the gamma and epsilon chains, while a peripheral stalk is formed by the delta, b and b' chains.

The protein localises to the plastid. It is found in the chloroplast thylakoid membrane. Its function is as follows. F(1)F(0) ATP synthase produces ATP from ADP in the presence of a proton or sodium gradient. F-type ATPases consist of two structural domains, F(1) containing the extramembraneous catalytic core and F(0) containing the membrane proton channel, linked together by a central stalk and a peripheral stalk. During catalysis, ATP synthesis in the catalytic domain of F(1) is coupled via a rotary mechanism of the central stalk subunits to proton translocation. This protein is part of the stalk that links CF(0) to CF(1). It either transmits conformational changes from CF(0) to CF(1) or is implicated in proton conduction. In Cyanidioschyzon merolae (strain NIES-3377 / 10D) (Unicellular red alga), this protein is ATP synthase subunit delta, chloroplastic.